Reading from the N-terminus, the 542-residue chain is Peptide chain release factor 3 (542 aa).

The tr-type G domain maps to 14 to 283; sequence DKRRNFAIIS…AFLEYALKPG (270 aa). Residues 23-30, 91-95, and 145-148 each bind GTP; these read SHPDAGKT, DTPGH, and NKMD.

The protein belongs to the TRAFAC class translation factor GTPase superfamily. Classic translation factor GTPase family. PrfC subfamily.

The protein localises to the cytoplasm. Increases the formation of ribosomal termination complexes and stimulates activities of RF-1 and RF-2. It binds guanine nucleotides and has strong preference for UGA stop codons. It may interact directly with the ribosome. The stimulation of RF-1 and RF-2 is significantly reduced by GTP and GDP, but not by GMP. This Trichodesmium erythraeum (strain IMS101) protein is Peptide chain release factor 3.